We begin with the raw amino-acid sequence, 202 residues long: FMN-dependent NADH:quinone oxidoreductase (202 aa).

FMN is bound by residues S10 and 95-98 (MYNF).

This sequence belongs to the azoreductase type 1 family. In terms of assembly, homodimer. Requires FMN as cofactor.

The catalysed reaction is 2 a quinone + NADH + H(+) = 2 a 1,4-benzosemiquinone + NAD(+). It carries out the reaction N,N-dimethyl-1,4-phenylenediamine + anthranilate + 2 NAD(+) = 2-(4-dimethylaminophenyl)diazenylbenzoate + 2 NADH + 2 H(+). Quinone reductase that provides resistance to thiol-specific stress caused by electrophilic quinones. Functionally, also exhibits azoreductase activity. Catalyzes the reductive cleavage of the azo bond in aromatic azo compounds to the corresponding amines. The chain is FMN-dependent NADH:quinone oxidoreductase from Alkalilimnicola ehrlichii (strain ATCC BAA-1101 / DSM 17681 / MLHE-1).